A 353-amino-acid polypeptide reads, in one-letter code: MKFALTGGGTGGHLSIAKALAIELEKQGIEAIYLGSTYGQDKEWFENSPLFSERYFFNTQGVVNKSFFKKIGSLFLQAKAAFKAKEILKKHQITHTISVGGFSAGPASFASLLNKIPLYIHEQNAIKGSLNRYLSPKAKAVFSSYAFKDKGNHVLTSYPVQNAFFDFARTRTEIKHILFLGGSQGAKAINEFALLNAPKLTKQGIKITHICGSDAHERMRFFYQELGLLDKVELFAFHNNITEVMHRADLCVSRAGASSVWELCANGLPTIFIPYPFASNNHQYYNVLEFEKENLCYVVPQNELLPKKLFEVIRKLNQKDDQGNKNLTTISNQLQQKIAKDGAKTIIETILSA.

UDP-N-acetyl-alpha-D-glucosamine is bound by residues 10–12, asparagine 124, serine 183, and glutamine 283; that span reads TGG.

It belongs to the glycosyltransferase 28 family. MurG subfamily.

Its subcellular location is the cell inner membrane. The enzyme catalyses di-trans,octa-cis-undecaprenyl diphospho-N-acetyl-alpha-D-muramoyl-L-alanyl-D-glutamyl-meso-2,6-diaminopimeloyl-D-alanyl-D-alanine + UDP-N-acetyl-alpha-D-glucosamine = di-trans,octa-cis-undecaprenyl diphospho-[N-acetyl-alpha-D-glucosaminyl-(1-&gt;4)]-N-acetyl-alpha-D-muramoyl-L-alanyl-D-glutamyl-meso-2,6-diaminopimeloyl-D-alanyl-D-alanine + UDP + H(+). Its pathway is cell wall biogenesis; peptidoglycan biosynthesis. In terms of biological role, cell wall formation. Catalyzes the transfer of a GlcNAc subunit on undecaprenyl-pyrophosphoryl-MurNAc-pentapeptide (lipid intermediate I) to form undecaprenyl-pyrophosphoryl-MurNAc-(pentapeptide)GlcNAc (lipid intermediate II). The sequence is that of UDP-N-acetylglucosamine--N-acetylmuramyl-(pentapeptide) pyrophosphoryl-undecaprenol N-acetylglucosamine transferase from Helicobacter pylori (strain Shi470).